The primary structure comprises 260 residues: DNA repair protein RecO (260 aa).

Belongs to the RecO family.

Involved in DNA repair and RecF pathway recombination. In Salinibacter ruber (strain DSM 13855 / M31), this protein is DNA repair protein RecO.